A 274-amino-acid polypeptide reads, in one-letter code: Large ribosomal subunit protein uL2 (274 aa).

A disordered region spans residues 223 to 274 (VAMNPVDHPHGGGEGRTSGGRHPVTPWGVPTKGYKTRSNKRTDKYIVRRRNK).

Belongs to the universal ribosomal protein uL2 family. Part of the 50S ribosomal subunit. Forms a bridge to the 30S subunit in the 70S ribosome.

Its function is as follows. One of the primary rRNA binding proteins. Required for association of the 30S and 50S subunits to form the 70S ribosome, for tRNA binding and peptide bond formation. It has been suggested to have peptidyltransferase activity; this is somewhat controversial. Makes several contacts with the 16S rRNA in the 70S ribosome. The sequence is that of Large ribosomal subunit protein uL2 from Shewanella oneidensis (strain ATCC 700550 / JCM 31522 / CIP 106686 / LMG 19005 / NCIMB 14063 / MR-1).